A 217-amino-acid chain; its full sequence is ATP-dependent Clp protease proteolytic subunit (217 aa).

Residue Ser119 is the Nucleophile of the active site. The active site involves His144.

This sequence belongs to the peptidase S14 family. Fourteen ClpP subunits assemble into 2 heptameric rings which stack back to back to give a disk-like structure with a central cavity, resembling the structure of eukaryotic proteasomes.

The protein resides in the cytoplasm. The catalysed reaction is Hydrolysis of proteins to small peptides in the presence of ATP and magnesium. alpha-casein is the usual test substrate. In the absence of ATP, only oligopeptides shorter than five residues are hydrolyzed (such as succinyl-Leu-Tyr-|-NHMec, and Leu-Tyr-Leu-|-Tyr-Trp, in which cleavage of the -Tyr-|-Leu- and -Tyr-|-Trp bonds also occurs).. Functionally, cleaves peptides in various proteins in a process that requires ATP hydrolysis. Has a chymotrypsin-like activity. Plays a major role in the degradation of misfolded proteins. This chain is ATP-dependent Clp protease proteolytic subunit, found in Bordetella petrii (strain ATCC BAA-461 / DSM 12804 / CCUG 43448).